Reading from the N-terminus, the 667-residue chain is DNA ligase (667 aa).

Residues 34–38 (DSEYD), 83–84 (SL), and Glu112 each bind NAD(+). Lys114 acts as the N6-AMP-lysine intermediate in catalysis. Positions 135, 169, 285, and 309 each coordinate NAD(+). Zn(2+) is bound by residues Cys403, Cys406, Cys421, and Cys426. The region spanning 589–667 (ASDSYFAGKT…EARLISELKK (79 aa)) is the BRCT domain.

This sequence belongs to the NAD-dependent DNA ligase family. LigA subfamily. It depends on Mg(2+) as a cofactor. The cofactor is Mn(2+).

It carries out the reaction NAD(+) + (deoxyribonucleotide)n-3'-hydroxyl + 5'-phospho-(deoxyribonucleotide)m = (deoxyribonucleotide)n+m + AMP + beta-nicotinamide D-nucleotide.. Functionally, DNA ligase that catalyzes the formation of phosphodiester linkages between 5'-phosphoryl and 3'-hydroxyl groups in double-stranded DNA using NAD as a coenzyme and as the energy source for the reaction. It is essential for DNA replication and repair of damaged DNA. The sequence is that of DNA ligase from Bacillus licheniformis (strain ATCC 14580 / DSM 13 / JCM 2505 / CCUG 7422 / NBRC 12200 / NCIMB 9375 / NCTC 10341 / NRRL NRS-1264 / Gibson 46).